Consider the following 306-residue polypeptide: D-alanine--D-alanine ligase (306 aa).

Positions 101 to 303 constitute an ATP-grasp domain; that stretch reads KYLWQGCGLP…FSQLVARILE (203 aa). 134–189 contributes to the ATP binding site; that stretch reads IDALGLPLFVKPSREGSSVGISRVNQASELQAALQEAFRFDDEVLVEAFLSGPEYT. Mg(2+) contacts are provided by aspartate 257, glutamate 270, and asparagine 272.

The protein belongs to the D-alanine--D-alanine ligase family. Mg(2+) is required as a cofactor. The cofactor is Mn(2+).

It localises to the cytoplasm. The catalysed reaction is 2 D-alanine + ATP = D-alanyl-D-alanine + ADP + phosphate + H(+). It functions in the pathway cell wall biogenesis; peptidoglycan biosynthesis. Its function is as follows. Cell wall formation. This is D-alanine--D-alanine ligase from Erwinia tasmaniensis (strain DSM 17950 / CFBP 7177 / CIP 109463 / NCPPB 4357 / Et1/99).